We begin with the raw amino-acid sequence, 328 residues long: tRNA dimethylallyltransferase (328 aa).

Residue Gly10–Thr17 coordinates ATP. Thr12–Thr17 is a substrate binding site.

This sequence belongs to the IPP transferase family. As to quaternary structure, monomer. Mg(2+) serves as cofactor.

It catalyses the reaction adenosine(37) in tRNA + dimethylallyl diphosphate = N(6)-dimethylallyladenosine(37) in tRNA + diphosphate. Catalyzes the transfer of a dimethylallyl group onto the adenine at position 37 in tRNAs that read codons beginning with uridine, leading to the formation of N6-(dimethylallyl)adenosine (i(6)A). The polypeptide is tRNA dimethylallyltransferase (Bifidobacterium longum (strain NCC 2705)).